A 545-amino-acid chain; its full sequence is E3 ubiquitin-protein ligase ipaH9.8 (545 aa).

The interaction with target proteins stretch occupies residues 1-242; that stretch reads MLPINNNFSL…YHGPRIYFSM (242 aa). LRR repeat units follow at residues 57–77, 78–99, 100–117, 118–139, 140–157, 158–179, 182–203, and 205–228; these read NSDELRLDRLNLSSLPDNLPA, QITLLNVSYNQLTNLPELPVTL, KKLYSASNKLSELPVLPP, ALESLQVQHNELENLPALPDSL, LTMNISYNEIVSLPSLPQ, ALKNLRATRNFLTELPAFSEGN, VVREYFFDRNQISHIPESILNL, and NECSIHISDNPLSSHALQALQRLT. Residues 243–250 are linker; it reads SDGQQNTL. Residues 251-545 are E3 ubiquitin-protein ligase catalytic domain; sequence HRPLADAVTA…SENGSQLHHS (295 aa). One can recognise an NEL domain in the interval 253 to 545; sequence PLADAVTAWF…SENGSQLHHS (293 aa). Catalysis depends on C337, which acts as the Glycyl thioester intermediate.

Belongs to the LRR-containing bacterial E3 ligase family. Also interacts with human and mouse U2AF1 (U2AF35). In terms of processing, ubiquitinated in the presence of host E1 ubiquitin-activating enzyme, E2 ubiquitin-conjugating enzyme and ubiquitin.

Its subcellular location is the secreted. It is found in the host cytoplasm. It localises to the host nucleus. The catalysed reaction is S-ubiquitinyl-[E2 ubiquitin-conjugating enzyme]-L-cysteine + [acceptor protein]-L-lysine = [E2 ubiquitin-conjugating enzyme]-L-cysteine + N(6)-ubiquitinyl-[acceptor protein]-L-lysine.. Exists in an autoinhibited state in the absence of substrate protein, due to interactions of the leucine-rich repeats with NEL domain. Is activated upon binding to a substrate protein. Effector E3 ubiquitin ligase that interferes with host's ubiquitination pathway and modulates the acute inflammatory responses, thus facilitating bacterial colonization within the host cell. Interacts with IKBKG (NEMO) and TNIP1 (ABIN-1), a ubiquitin-binding adapter protein, which results in TNIP1-dependent 'Lys-27'-linked polyubiquitination of IKBKG. Consequently, polyubiquitinated IKBKG undergoes proteasome-dependent degradation, which perturbs NF-kappa-B activation during bacterial infection. Mediates polyubiquitination of host U2AF1, leading to its proteasomal degradation. Catalyzes 'Lys-48'-linked polyubiquitination and subsequent degradation of a subset of host guanylate-binding proteins (GBP1, GBP2, GBP4 and GBP6), thereby suppressing host cell defense. In contrast, host GBP3 and GBP7 are not ubiquitinated by IpaH9.8. Uses UBE2D2 (UBCH5B) as an E2 ubiquitin-conjugating enzyme. In Shigella flexneri serotype X (strain 2002017), this protein is E3 ubiquitin-protein ligase ipaH9.8 (ipaH9.8).